Here is a 571-residue protein sequence, read N- to C-terminus: Septation ring formation regulator EzrA (571 aa).

Residues 1–3 (MYY) lie on the Extracellular side of the membrane. Residues 4-22 (MLIGFIIVVIAVIGAGYIL) form a helical membrane-spanning segment. Residues 23 to 571 (KRKHYQRINE…ASKVSVDDIE (549 aa)) lie on the Cytoplasmic side of the membrane. Coiled-coil stretches lie at residues 102–147 (ATNA…TKEK), 248–298 (LAQM…DTLE), 326–374 (DALA…ASGE), 400–437 (KFAE…ERER), and 478–529 (RIAE…ENHF).

The protein belongs to the EzrA family.

The protein resides in the cell membrane. Its function is as follows. Negative regulator of FtsZ ring formation; modulates the frequency and position of FtsZ ring formation. Inhibits FtsZ ring formation at polar sites. Interacts either with FtsZ or with one of its binding partners to promote depolymerization. The polypeptide is Septation ring formation regulator EzrA (Listeria monocytogenes serotype 4a (strain HCC23)).